A 292-amino-acid polypeptide reads, in one-letter code: 4-hydroxy-tetrahydrodipicolinate synthase (292 aa).

A pyruvate-binding site is contributed by threonine 45. The active-site Proton donor/acceptor is the tyrosine 133. The active-site Schiff-base intermediate with substrate is the lysine 161. Isoleucine 203 serves as a coordination point for pyruvate.

The protein belongs to the DapA family. As to quaternary structure, homotetramer; dimer of dimers.

It is found in the cytoplasm. It carries out the reaction L-aspartate 4-semialdehyde + pyruvate = (2S,4S)-4-hydroxy-2,3,4,5-tetrahydrodipicolinate + H2O + H(+). It functions in the pathway amino-acid biosynthesis; L-lysine biosynthesis via DAP pathway; (S)-tetrahydrodipicolinate from L-aspartate: step 3/4. Functionally, catalyzes the condensation of (S)-aspartate-beta-semialdehyde [(S)-ASA] and pyruvate to 4-hydroxy-tetrahydrodipicolinate (HTPA). The protein is 4-hydroxy-tetrahydrodipicolinate synthase of Vibrio cholerae serotype O1 (strain M66-2).